A 195-amino-acid polypeptide reads, in one-letter code: IYGSKVQYTASMYWVLGFIFLFTLGGLTGIVLSNSSLDIMLHDTYYVVAHFHYVLSMGAVFAIFAGFNFWFPVMTGLVLHERLAKAQFIVMFIAVNMTFFPQHFLGLAGMPRRYSDYPDSYFMWNQLSSYGSLMSVFAVLLFVLIVWEAFLSQRSLLFVDATLYSREWSDGYFPPDFHSNIYQSYITIYKTYYSK.

The helical transmembrane segment at 12 to 32 (MYWVLGFIFLFTLGGLTGIVL) threads the bilayer. Residues His-42 and Asp-43 each coordinate Mg(2+). Position 50 (His-50) interacts with heme a3. Residue His-52 coordinates Fe(II)-heme a. A run of 3 helical transmembrane segments spans residues 59–79 (AVFAIFAGFNFWFPVMTGLVL), 88–108 (FIVMFIAVNMTFFPQHFLGLA), and 131–151 (GSLMSVFAVLLFVLIVWEAFL).

This sequence belongs to the heme-copper respiratory oxidase family. Component of the cytochrome c oxidase (complex IV, CIV), a multisubunit enzyme composed of a catalytic core of 3 subunits and several supernumerary subunits. The complex exists as a monomer or a dimer and forms supercomplexes (SCs) in the inner mitochondrial membrane with ubiquinol-cytochrome c oxidoreductase (cytochrome b-c1 complex, complex III, CIII). It depends on heme as a cofactor. The cofactor is Cu cation.

It is found in the mitochondrion inner membrane. The catalysed reaction is 4 Fe(II)-[cytochrome c] + O2 + 8 H(+)(in) = 4 Fe(III)-[cytochrome c] + 2 H2O + 4 H(+)(out). Its pathway is energy metabolism; oxidative phosphorylation. In terms of biological role, component of the cytochrome c oxidase, the last enzyme in the mitochondrial electron transport chain which drives oxidative phosphorylation. The respiratory chain contains 3 multisubunit complexes succinate dehydrogenase (complex II, CII), ubiquinol-cytochrome c oxidoreductase (cytochrome b-c1 complex, complex III, CIII) and cytochrome c oxidase (complex IV, CIV), that cooperate to transfer electrons derived from NADH and succinate to molecular oxygen, creating an electrochemical gradient over the inner membrane that drives transmembrane transport and the ATP synthase. Cytochrome c oxidase is the component of the respiratory chain that catalyzes the reduction of oxygen to water. Electrons originating from reduced cytochrome c in the intermembrane space (IMS) are transferred via the dinuclear copper A center (CU(A)) of subunit 2 and heme A of subunit 1 to the active site in subunit 1, a binuclear center (BNC) formed by heme A3 and copper B (CU(B)). The BNC reduces molecular oxygen to 2 water molecules using 4 electrons from cytochrome c in the IMS and 4 protons from the mitochondrial matrix. The protein is Cytochrome c oxidase subunit 1 (COI) of Albinaria turrita (Door snail).